Reading from the N-terminus, the 453-residue chain is Ribulose bisphosphate carboxylase large chain (453 aa).

Residues 1–2 (MS) constitute a propeptide that is removed on maturation. An N-acetylproline modification is found at Pro3. Residue Lys14 is modified to N6,N6,N6-trimethyllysine. The substrate site is built by Asn123 and Thr173. Residue Lys175 is the Proton acceptor of the active site. Lys177 is a binding site for substrate. The Mg(2+) site is built by Lys201, Asp203, and Glu204. Lys201 is subject to N6-carboxylysine. The Proton acceptor role is filled by His294. Substrate is bound by residues Arg295, His327, and Ser379.

The protein belongs to the RuBisCO large chain family. Type I subfamily. As to quaternary structure, heterohexadecamer of 8 large chains and 8 small chains; disulfide-linked. The disulfide link is formed within the large subunit homodimers. Mg(2+) is required as a cofactor. Post-translationally, the disulfide bond which can form in the large chain dimeric partners within the hexadecamer appears to be associated with oxidative stress and protein turnover.

It is found in the plastid. Its subcellular location is the chloroplast. The catalysed reaction is 2 (2R)-3-phosphoglycerate + 2 H(+) = D-ribulose 1,5-bisphosphate + CO2 + H2O. It catalyses the reaction D-ribulose 1,5-bisphosphate + O2 = 2-phosphoglycolate + (2R)-3-phosphoglycerate + 2 H(+). Functionally, ruBisCO catalyzes two reactions: the carboxylation of D-ribulose 1,5-bisphosphate, the primary event in carbon dioxide fixation, as well as the oxidative fragmentation of the pentose substrate in the photorespiration process. Both reactions occur simultaneously and in competition at the same active site. The protein is Ribulose bisphosphate carboxylase large chain of Hydnophytum formicarum (Ant plant).